The sequence spans 383 residues: Succinate--CoA ligase [ADP-forming] subunit beta (383 aa).

The 228-residue stretch at 9 to 236 folds into the ATP-grasp domain; it reads KELLGRFGLR…VEAADPQEHR (228 aa). ATP-binding positions include Lys45, 52–54, Glu91, Ala94, and Glu99; that span reads GRG. Mg(2+) contacts are provided by Asn191 and Asp205. Residues Asn256 and 313-315 each bind substrate; that span reads GIT.

Belongs to the succinate/malate CoA ligase beta subunit family. In terms of assembly, heterotetramer of two alpha and two beta subunits. Mg(2+) is required as a cofactor.

It catalyses the reaction succinate + ATP + CoA = succinyl-CoA + ADP + phosphate. It carries out the reaction GTP + succinate + CoA = succinyl-CoA + GDP + phosphate. Its pathway is carbohydrate metabolism; tricarboxylic acid cycle; succinate from succinyl-CoA (ligase route): step 1/1. In terms of biological role, succinyl-CoA synthetase functions in the citric acid cycle (TCA), coupling the hydrolysis of succinyl-CoA to the synthesis of either ATP or GTP and thus represents the only step of substrate-level phosphorylation in the TCA. The beta subunit provides nucleotide specificity of the enzyme and binds the substrate succinate, while the binding sites for coenzyme A and phosphate are found in the alpha subunit. The polypeptide is Succinate--CoA ligase [ADP-forming] subunit beta (Rubrobacter xylanophilus (strain DSM 9941 / JCM 11954 / NBRC 16129 / PRD-1)).